The sequence spans 205 residues: Probable thymidylate kinase (205 aa).

Glycine 10–threonine 17 is a binding site for ATP.

This sequence belongs to the thymidylate kinase family.

The enzyme catalyses dTMP + ATP = dTDP + ADP. This is Probable thymidylate kinase (tmk) from Pyrococcus horikoshii (strain ATCC 700860 / DSM 12428 / JCM 9974 / NBRC 100139 / OT-3).